Consider the following 113-residue polypeptide: HIG1 domain-containing protein C25B8.07c, mitochondrial (113 aa).

Residues 1–27 (MSSKLPKKSEENLELPTFPASEESLSR) are disordered. The 92-residue stretch at 12 to 103 (NLELPTFPAS…PPRREAPSNS (92 aa)) folds into the HIG1 domain. Helical transmembrane passes span 39 to 59 (PFIP…GYYI) and 75 to 95 (VMSQ…IGPP).

It is found in the mitochondrion membrane. This Schizosaccharomyces pombe (strain 972 / ATCC 24843) (Fission yeast) protein is HIG1 domain-containing protein C25B8.07c, mitochondrial.